We begin with the raw amino-acid sequence, 185 residues long: MVEVGDIRKGMALIIDNDIYIVLDVNKHFTARGSGIIRTKMKNIRTGYVREFKFNSGEKVEEASLSLRHVQYLYRDGDLFYFMDLETYEQYALDKDIIGEAVYYLKENMELDLQFHDSTPIGVVLPNTVILEVVETAPSYKGDTVSGGGKPAVCETGLKVIVPFFVETGQKIKVDTRTGEYIERA.

This sequence belongs to the elongation factor P family.

The protein resides in the cytoplasm. It participates in protein biosynthesis; polypeptide chain elongation. In terms of biological role, involved in peptide bond synthesis. Stimulates efficient translation and peptide-bond synthesis on native or reconstituted 70S ribosomes in vitro. Probably functions indirectly by altering the affinity of the ribosome for aminoacyl-tRNA, thus increasing their reactivity as acceptors for peptidyl transferase. The chain is Elongation factor P from Kosmotoga olearia (strain ATCC BAA-1733 / DSM 21960 / TBF 19.5.1).